The primary structure comprises 2226 residues: DNA polymerase epsilon catalytic subunit A (2226 aa).

The segment at 1240-1265 is disordered; it reads RVSKVTSRKRRNGKANNVSDSEEEER. Residues C2112, C2115, C2134, and C2137 each contribute to the Zn(2+) site. The CysA-type zinc-finger motif lies at 2112–2137; it reads CDYCNYIRDIDFCRDEQKNIWNCSNC. The [4Fe-4S] cluster site is built by C2168, C2171, C2183, and C2185. Positions 2168 to 2185 match the CysB motif motif; the sequence is CSKCHQIKSDNMSEYCKC.

This sequence belongs to the DNA polymerase type-B family. As to quaternary structure, heterotetramer. Consists of 4 subunits: POL2, DPB2, DPB3 and DPB4. It depends on [4Fe-4S] cluster as a cofactor.

The protein localises to the nucleus. The enzyme catalyses DNA(n) + a 2'-deoxyribonucleoside 5'-triphosphate = DNA(n+1) + diphosphate. Functionally, DNA polymerase II participates in chromosomal DNA replication. In Debaryomyces hansenii (strain ATCC 36239 / CBS 767 / BCRC 21394 / JCM 1990 / NBRC 0083 / IGC 2968) (Yeast), this protein is DNA polymerase epsilon catalytic subunit A (POL2).